A 295-amino-acid polypeptide reads, in one-letter code: Bifunctional protein FolD (295 aa).

NADP(+) is bound by residues 177-179 (GRS) and S202.

The protein belongs to the tetrahydrofolate dehydrogenase/cyclohydrolase family. Homodimer.

It carries out the reaction (6R)-5,10-methylene-5,6,7,8-tetrahydrofolate + NADP(+) = (6R)-5,10-methenyltetrahydrofolate + NADPH. The enzyme catalyses (6R)-5,10-methenyltetrahydrofolate + H2O = (6R)-10-formyltetrahydrofolate + H(+). It functions in the pathway one-carbon metabolism; tetrahydrofolate interconversion. Functionally, catalyzes the oxidation of 5,10-methylenetetrahydrofolate to 5,10-methenyltetrahydrofolate and then the hydrolysis of 5,10-methenyltetrahydrofolate to 10-formyltetrahydrofolate. The sequence is that of Bifunctional protein FolD from Psychrobacter arcticus (strain DSM 17307 / VKM B-2377 / 273-4).